Reading from the N-terminus, the 446-residue chain is tRNA modification GTPase MnmE (446 aa).

Arginine 24, glutamate 81, and lysine 120 together coordinate (6S)-5-formyl-5,6,7,8-tetrahydrofolate. The TrmE-type G domain occupies 216-368 (GLHAVLIGPP…LHIRLRELAL (153 aa)). Residue asparagine 226 participates in K(+) binding. Residues 226 to 231 (NAGKSS), 245 to 251 (TDVAGTT), and 270 to 273 (DTAG) contribute to the GTP site. Serine 230 is a Mg(2+) binding site. Residues threonine 245, valine 247, and threonine 250 each contribute to the K(+) site. Threonine 251 contributes to the Mg(2+) binding site. Lysine 446 is a (6S)-5-formyl-5,6,7,8-tetrahydrofolate binding site.

It belongs to the TRAFAC class TrmE-Era-EngA-EngB-Septin-like GTPase superfamily. TrmE GTPase family. Homodimer. Heterotetramer of two MnmE and two MnmG subunits. K(+) serves as cofactor.

The protein resides in the cytoplasm. Functionally, exhibits a very high intrinsic GTPase hydrolysis rate. Involved in the addition of a carboxymethylaminomethyl (cmnm) group at the wobble position (U34) of certain tRNAs, forming tRNA-cmnm(5)s(2)U34. This chain is tRNA modification GTPase MnmE, found in Xanthomonas oryzae pv. oryzae (strain PXO99A).